A 319-amino-acid polypeptide reads, in one-letter code: Annexin A5 (319 aa).

At A2 the chain carries N-acetylalanine. Annexin repeat units lie at residues 13–84, 85–156, 168–240, and 244–315; these read FDGR…ALMK, PSRL…VLLQ, AQVE…AVVK, and SIPA…LLCG. A Glycyl lysine isopeptide (Lys-Gly) (interchain with G-Cter in SUMO1); alternate cross-link involves residue K27. K27 participates in a covalent cross-link: Glycyl lysine isopeptide (Lys-Gly) (interchain with G-Cter in SUMO2); alternate. The residue at position 35 (S35) is a Phosphoserine. K68, K74, K77, K95, and K99 each carry N6-acetyllysine. At K288 the chain carries N6-succinyllysine. The short motif at 312–318 is the [IL]-x-C-x-x-[DE] motif element; the sequence is LLCGGED.

The protein belongs to the annexin family. In terms of assembly, monomer. Binds ATRX, EIF5B and DNMT1. S-nitrosylation is induced by interferon-gamma and oxidatively-modified low-densitity lipoprotein (LDL(ox)) possibly implicating the iNOS-S100A8/9 transnitrosylase complex.

In terms of biological role, this protein is an anticoagulant protein that acts as an indirect inhibitor of the thromboplastin-specific complex, which is involved in the blood coagulation cascade. This is Annexin A5 (Anxa5) from Rattus norvegicus (Rat).